The sequence spans 381 residues: Chaperone protein DnaJ (381 aa).

The region spanning 4-69 is the J domain; it reads DYYEILGVAR…EKRARYDQFG (66 aa). The CR-type zinc finger occupies 139–221; sequence GGEKELRVTR…CGGSGLVRKT (83 aa). Cys-152, Cys-155, Cys-169, Cys-172, Cys-195, Cys-198, Cys-209, and Cys-212 together coordinate Zn(2+). 4 CXXCXGXG motif repeats span residues 152 to 159, 169 to 176, 195 to 202, and 209 to 216; these read CGHCHGNG, CPTCQGRG, CSTCRGEG, and CRECGGSG.

This sequence belongs to the DnaJ family. As to quaternary structure, homodimer. Zn(2+) serves as cofactor.

The protein localises to the cytoplasm. In terms of biological role, participates actively in the response to hyperosmotic and heat shock by preventing the aggregation of stress-denatured proteins and by disaggregating proteins, also in an autonomous, DnaK-independent fashion. Unfolded proteins bind initially to DnaJ; upon interaction with the DnaJ-bound protein, DnaK hydrolyzes its bound ATP, resulting in the formation of a stable complex. GrpE releases ADP from DnaK; ATP binding to DnaK triggers the release of the substrate protein, thus completing the reaction cycle. Several rounds of ATP-dependent interactions between DnaJ, DnaK and GrpE are required for fully efficient folding. Also involved, together with DnaK and GrpE, in the DNA replication of plasmids through activation of initiation proteins. This Carboxydothermus hydrogenoformans (strain ATCC BAA-161 / DSM 6008 / Z-2901) protein is Chaperone protein DnaJ.